We begin with the raw amino-acid sequence, 490 residues long: Probable glycine dehydrogenase (decarboxylating) subunit 2 (490 aa).

Lysine 273 is subject to N6-(pyridoxal phosphate)lysine.

This sequence belongs to the GcvP family. C-terminal subunit subfamily. As to quaternary structure, the glycine cleavage system is composed of four proteins: P, T, L and H. In this organism, the P 'protein' is a heterodimer of two subunits. Requires pyridoxal 5'-phosphate as cofactor.

The enzyme catalyses N(6)-[(R)-lipoyl]-L-lysyl-[glycine-cleavage complex H protein] + glycine + H(+) = N(6)-[(R)-S(8)-aminomethyldihydrolipoyl]-L-lysyl-[glycine-cleavage complex H protein] + CO2. Functionally, the glycine cleavage system catalyzes the degradation of glycine. The P protein binds the alpha-amino group of glycine through its pyridoxal phosphate cofactor; CO(2) is released and the remaining methylamine moiety is then transferred to the lipoamide cofactor of the H protein. The sequence is that of Probable glycine dehydrogenase (decarboxylating) subunit 2 from Staphylococcus aureus (strain MRSA252).